A 149-amino-acid polypeptide reads, in one-letter code: Ribonuclease H (149 aa).

The RNase H type-1 domain maps to 1 to 143 (MNQVVIYTDG…ADALANKGVD (143 aa)). Mg(2+)-binding residues include D9, E47, D69, and D135.

It belongs to the RNase H family. As to quaternary structure, monomer. It depends on Mg(2+) as a cofactor.

Its subcellular location is the cytoplasm. It catalyses the reaction Endonucleolytic cleavage to 5'-phosphomonoester.. In terms of biological role, endonuclease that specifically degrades the RNA of RNA-DNA hybrids. This Paracidovorax citrulli (strain AAC00-1) (Acidovorax citrulli) protein is Ribonuclease H.